The sequence spans 1371 residues: DNA-directed RNA polymerase subunit beta'' (1371 aa).

4 residues coordinate Zn(2+): cysteine 220, cysteine 293, cysteine 300, and cysteine 303.

It belongs to the RNA polymerase beta' chain family. RpoC2 subfamily. In plastids the minimal PEP RNA polymerase catalytic core is composed of four subunits: alpha, beta, beta', and beta''. When a (nuclear-encoded) sigma factor is associated with the core the holoenzyme is formed, which can initiate transcription. Requires Zn(2+) as cofactor.

The protein localises to the plastid. The protein resides in the chloroplast. It carries out the reaction RNA(n) + a ribonucleoside 5'-triphosphate = RNA(n+1) + diphosphate. Its function is as follows. DNA-dependent RNA polymerase catalyzes the transcription of DNA into RNA using the four ribonucleoside triphosphates as substrates. In Lobularia maritima (Sweet alyssum), this protein is DNA-directed RNA polymerase subunit beta''.